The chain runs to 500 residues: NAD(P)H-quinone oxidoreductase chain 4, chloroplastic (500 aa).

The next 14 helical transmembrane spans lie at 4-24, 35-55, 84-104, 113-133, 134-154, 167-187, 211-231, 242-262, 272-292, 305-325, 330-350, 386-406, 416-436, and 463-483; these read FPWL…IFVF, YTIF…SYYF, GLSL…TLAA, LFHF…SSQN, LLLF…LLAM, FILY…GIAF, ILFY…IPLH, HYST…YGLV, AHSI…IYAA, IAYS…SISD, GAIL…FLSG, LALP…GIIT, ILIT…LLSM, and FVSI…DFVF.

Belongs to the complex I subunit 4 family.

The protein localises to the plastid. It is found in the chloroplast thylakoid membrane. It catalyses the reaction a plastoquinone + NADH + (n+1) H(+)(in) = a plastoquinol + NAD(+) + n H(+)(out). The enzyme catalyses a plastoquinone + NADPH + (n+1) H(+)(in) = a plastoquinol + NADP(+) + n H(+)(out). The polypeptide is NAD(P)H-quinone oxidoreductase chain 4, chloroplastic (Populus trichocarpa (Western balsam poplar)).